A 388-amino-acid chain; its full sequence is Putative N(4)-(beta-N-acetylglucosaminyl)-L-asparaginase GL17147 (388 aa).

Positions 1–20 are cleaved as a signal peptide; the sequence is MYKAQYLWLFGLVLISRSAT. 2 cysteine pairs are disulfide-bonded: C94–C99 and C193–C209. The active-site Nucleophile is the T240. Residues 268-271 and 291-294 each bind substrate; these read RVGD and TGDG. C351 and C378 are joined by a disulfide.

Belongs to the Ntn-hydrolase family. In terms of assembly, heterotetramer of two alpha and two beta chains arranged as a dimer of alpha/beta heterodimers. In terms of processing, cleaved into an alpha and beta chain by autocatalysis; this activates the enzyme. The N-terminal residue of the beta subunit is responsible for the nucleophile hydrolase activity.

It carries out the reaction N(4)-(beta-N-acetyl-D-glucosaminyl)-L-asparagine + H2O = N-acetyl-beta-D-glucosaminylamine + L-aspartate + H(+). Its function is as follows. Cleaves the GlcNAc-Asn bond which joins oligosaccharides to the peptide of asparagine-linked glycoproteins. The protein is Putative N(4)-(beta-N-acetylglucosaminyl)-L-asparaginase GL17147 of Drosophila persimilis (Fruit fly).